A 291-amino-acid chain; its full sequence is Acetyl-coenzyme A carboxylase carboxyl transferase subunit beta (291 aa).

The disordered stretch occupies residues 1 to 23 (MSWLSKLMPSGIRTDNTPSKKRS). The 264-residue stretch at 28–291 (LWEKCSNCGS…LGRQPAPEVA (264 aa)) folds into the CoA carboxyltransferase N-terminal domain. Residues cysteine 32, cysteine 35, cysteine 51, and cysteine 54 each coordinate Zn(2+). Residues 32-54 (CSNCGSALYRPELEENLEVCPKC) form a C4-type zinc finger.

This sequence belongs to the AccD/PCCB family. As to quaternary structure, acetyl-CoA carboxylase is a heterohexamer composed of biotin carboxyl carrier protein (AccB), biotin carboxylase (AccC) and two subunits each of ACCase subunit alpha (AccA) and ACCase subunit beta (AccD). It depends on Zn(2+) as a cofactor.

It localises to the cytoplasm. It catalyses the reaction N(6)-carboxybiotinyl-L-lysyl-[protein] + acetyl-CoA = N(6)-biotinyl-L-lysyl-[protein] + malonyl-CoA. It functions in the pathway lipid metabolism; malonyl-CoA biosynthesis; malonyl-CoA from acetyl-CoA: step 1/1. Its function is as follows. Component of the acetyl coenzyme A carboxylase (ACC) complex. Biotin carboxylase (BC) catalyzes the carboxylation of biotin on its carrier protein (BCCP) and then the CO(2) group is transferred by the transcarboxylase to acetyl-CoA to form malonyl-CoA. The polypeptide is Acetyl-coenzyme A carboxylase carboxyl transferase subunit beta (Stenotrophomonas maltophilia (strain K279a)).